Here is a 758-residue protein sequence, read N- to C-terminus: Matrix metalloproteinase-2 (758 aa).

The signal sequence occupies residues 1-17 (MFSKYVLATLLALFAQS). Residue H257 coordinates Zn(2+). Residue E258 is part of the active site. Zn(2+)-binding residues include H261 and H267. Residues 335–514 (AYWPWNNPSN…HNKPRKPKPD (180 aa)) form a disordered region. Low complexity predominate over residues 338-348 (PWNNPSNNPNN). Residues 349–476 (DRNRARERQE…EWERRNRNGA (128 aa)) are compositionally biased toward basic and acidic residues. Over residues 479–494 (PVTPTANTTPRPTNKP) the composition is skewed to low complexity. A compositionally biased stretch (basic residues) spans 499–510 (HRQHHHHNKPRK). Hemopexin repeat units lie at residues 513 to 561 (PDSC…WSAL), 565 to 610 (LTKV…GLPP), 612 to 659 (LTHI…WSGV), and 660 to 707 (GYNI…WMQC). A disulfide bridge connects residues C516 and C707. A helical membrane pass occupies residues 739–756 (LRINHFILSILLLAIANW). Residues 757–758 (RS) are Cytoplasmic-facing.

Belongs to the peptidase M10A family. Ca(2+) serves as cofactor. Requires Zn(2+) as cofactor. As to expression, widely expressed during embryogenesis including in the mesoderm, developing gut, central and peripheral nervous systems and imaginal disks. In the embryonic nervous system, expressed in neurons and glia. In third instar larvae, strongly expressed in the morphogenetic furrow of eye imaginal disks and in the optic lobe region of the brain. Expressed in posterior follicle cells in all mature stage 14 follicles but not in earlier follicles and is also expressed in some anterior follicle cells that help form dorsal eggshell structures.

Its subcellular location is the cell membrane. Its function is as follows. Has metalloproteinase activity. Proteolytically cleaves the PGRP-LC receptor; involved in gut-fat body innate immunological communication (GFIC)-mediated activation of the imd/Relish signal transduction pathway. Required for larval tissue histolysis during metamorphosis and is involved in pupal head eversion and fusion of the wing imaginal tissue. Required for growth of the dorsal air sac primordium and development of the dorsal air sacs. Promotes embryonic motor axon fasciculation. Cleaves and activates frac to promote motor axon bundling during outgrowth. Promotes the reshaping of adult sensory neuron dendrites from a radial to lattice-like shape which occurs after eclosion by degrading the basement membrane on which the dendrites grow. Involved in inhibition of follicle stem cell proliferation by cleaving Dlp, inhibiting its interaction with wg and preventing Dlp-mediated spreading of wg to follicle stem cells to enhance their proliferation. Plays a role in wound healing. Involved in fat body dissociation which occurs during metamorphosis by degrading basement membrane components, leading to destruction of cell-basement membrane junctions. Required for posterior follicle cell degradation and ovulation. The chain is Matrix metalloproteinase-2 from Drosophila melanogaster (Fruit fly).